Reading from the N-terminus, the 175-residue chain is Glucagon family neuropeptides (175 aa).

Residues 1–23 (MSGNVYKTLLTLLVYGLIMHCNV) form the signal peptide. A propeptide spanning residues 24-80 (YCSPDRWTPVPGAKLEEEVYDEDGNTLQDFALRAGAPGGGGPRPRWGRCTALYYPPG) is cleaved from the precursor. The interval 149–157 (VKKYLAAVL) is important for receptor binding. Leucine 157 is modified (leucine amide). Lysine 168 is subject to Lysine amide. A propeptide spanning residues 172 to 175 (VAYL) is cleaved from the precursor.

Belongs to the glucagon family.

The protein resides in the secreted. Functionally, primary role of GRF is to release GH from the pituitary. In terms of biological role, PACAP is a neuropeptide involved in diverse array of physiological processes through activating the PACAP subfamily of class B1 G protein-coupled receptors: VIP receptor 1 (VIPR1), VIP receptor 2 (VIPR2), and PACAP type I receptor (ADCYAP1R1). Exerts neuroprotective and general cytoprotective effects due to anti-apoptotic, anti-inflammatory, and antioxidant actions. Promotes neuron projection development through the RAPGEF2/Rap1/B-Raf/ERK pathway. In chromaffin cells, induces long-lasting increase of intracellular calcium concentrations and neuroendocrine secretion. Involved in the control of glucose homeostasis, induces insulin secretion by pancreatic beta cells. PACAP exists in two bioactive forms from proteolysis of the same precursor protein, PACAP27 and PACAP38, which differ by eleven amino acid residues in the C-terminus. The polypeptide is Glucagon family neuropeptides (ADCYAP1) (Gallus gallus (Chicken)).